A 631-amino-acid polypeptide reads, in one-letter code: uncharacterized protein (631 aa).

The next 9 membrane-spanning stretches (helical) occupy residues 42–62 (VLVG…IGGF), 76–96 (ALKL…GTLL), 106–128 (VLGL…GPAP), 152–172 (AGLT…GWLW), 344–364 (ALKY…FGFA), 366–386 (SYWI…VFTL), 398–418 (IGVI…YIAF), 429–449 (MLIV…ALVI), and 464–484 (IARL…TMLL).

The protein belongs to the YccS/YhfK family.

The protein localises to the cell membrane. This is an uncharacterized protein from Bacillus subtilis (strain 168).